The chain runs to 178 residues: Interleukin-10 (178 aa).

The signal sequence occupies residues 1-18; it reads MPSSALLYCLILLAGVRP. 2 cysteine pairs are disulfide-bonded: C30–C126 and C80–C132. A glycan (N-linked (GlcNAc...) asparagine) is linked at N134.

The protein belongs to the IL-10 family. Homodimer. Interacts with IL10RA and IL10RB.

It is found in the secreted. Major immune regulatory cytokine that acts on many cells of the immune system where it has profound anti-inflammatory functions, limiting excessive tissue disruption caused by inflammation. Mechanistically, IL10 binds to its heterotetrameric receptor comprising IL10RA and IL10RB leading to JAK1 and STAT2-mediated phosphorylation of STAT3. In turn, STAT3 translocates to the nucleus where it drives expression of anti-inflammatory mediators. Targets antigen-presenting cells (APCs) such as macrophages and monocytes and inhibits their release of pro-inflammatory cytokines including granulocyte-macrophage colony-stimulating factor /GM-CSF, granulocyte colony-stimulating factor/G-CSF, IL-1 alpha, IL-1 beta, IL-6, IL-8 and TNF-alpha. Also interferes with antigen presentation by reducing the expression of MHC-class II and co-stimulatory molecules, thereby inhibiting their ability to induce T cell activation. In addition, controls the inflammatory response of macrophages by reprogramming essential metabolic pathways including mTOR signaling. The polypeptide is Interleukin-10 (IL10) (Meriones unguiculatus (Mongolian jird)).